Here is a 605-residue protein sequence, read N- to C-terminus: Beta-conglycinin alpha subunit 1 (605 aa).

Residues 1 to 22 (MMRARFPLLLLGLVFLASVSVS) form the signal peptide. Residues 23–62 (FGIAYWEKENPKHNKCLQSCNSERDSYRNQACHARCNLLK) constitute a propeptide that is removed on maturation. The segment at 65–195 (KEECEEGEIP…ELRRHKNKNP (131 aa)) is disordered. Residues 111 to 136 (PRQEEEHEQREEQEWPRKEEKRGEKG) are compositionally biased toward basic and acidic residues. Acidic residues-rich tracts occupy residues 137-149 (SEEE…EEQD) and 169-184 (EDED…ESED). Cupin type-1 domains follow at residues 196-354 (FLFG…EEIN) and 406-567 (FNLR…QAVE). N-linked (GlcNAc...) asparagine glycans are attached at residues Asn261 and Asn517.

The protein belongs to the 7S seed storage protein family. The alpha-, alpha'-, and beta-subunits associate in various combinations to form trimeric proteins.

The protein localises to the vacuole. It is found in the aleurone grain. The protein resides in the endoplasmic reticulum. It localises to the protein storage vacuole. Functionally, seed storage protein. Accumulates during seed development and is hydrolyzed after germination to provide a carbon and nitrogen source for the developing seedling. The sequence is that of Beta-conglycinin alpha subunit 1 from Glycine max (Soybean).